The primary structure comprises 299 residues: Coenzyme PQQ synthesis protein B (299 aa).

It belongs to the PqqB family.

Its pathway is cofactor biosynthesis; pyrroloquinoline quinone biosynthesis. May be involved in the transport of PQQ or its precursor to the periplasm. The chain is Coenzyme PQQ synthesis protein B from Methylorubrum extorquens (strain CM4 / NCIMB 13688) (Methylobacterium extorquens).